The sequence spans 190 residues: Holliday junction branch migration complex subunit RuvA (190 aa).

Residues 1–64 form a domain I region; that stretch reads MIGRITGTLI…EDAHILYGFA (64 aa). Residues 65-137 form a domain II region; that stretch reads TAAERGAFRE…MRGKLGADIG (73 aa). The tract at residues 137-141 is flexible linker; sequence GATAH. Residues 142–190 are domain III; it reads AVPDSQTDILNALLALGYSDKESQAALKKLPEGTGVSEGIRLALKALVR.

Belongs to the RuvA family. Homotetramer. Forms an RuvA(8)-RuvB(12)-Holliday junction (HJ) complex. HJ DNA is sandwiched between 2 RuvA tetramers; dsDNA enters through RuvA and exits via RuvB. An RuvB hexamer assembles on each DNA strand where it exits the tetramer. Each RuvB hexamer is contacted by two RuvA subunits (via domain III) on 2 adjacent RuvB subunits; this complex drives branch migration. In the full resolvosome a probable DNA-RuvA(4)-RuvB(12)-RuvC(2) complex forms which resolves the HJ.

It is found in the cytoplasm. In terms of biological role, the RuvA-RuvB-RuvC complex processes Holliday junction (HJ) DNA during genetic recombination and DNA repair, while the RuvA-RuvB complex plays an important role in the rescue of blocked DNA replication forks via replication fork reversal (RFR). RuvA specifically binds to HJ cruciform DNA, conferring on it an open structure. The RuvB hexamer acts as an ATP-dependent pump, pulling dsDNA into and through the RuvAB complex. HJ branch migration allows RuvC to scan DNA until it finds its consensus sequence, where it cleaves and resolves the cruciform DNA. In Bordetella petrii (strain ATCC BAA-461 / DSM 12804 / CCUG 43448), this protein is Holliday junction branch migration complex subunit RuvA.